Consider the following 115-residue polypeptide: MAKPEPDVVVPEGDPAKGAKLFKSKCAQCHTINKGGSVKQGPNLFGFYGRKSGSTDYAYSDANKNSGIVWSDKHLFVYLVNPKQYIPGTKMVFAGLKKEQDRADLIAYLKEASSK.

Residues cysteine 26, cysteine 29, histidine 30, and methionine 91 each contribute to the heme c site.

The protein belongs to the cytochrome c family. In terms of processing, binds 1 heme c group covalently per subunit.

It localises to the mitochondrion intermembrane space. Electron carrier protein. The oxidized form of the cytochrome c heme group can accept an electron from the heme group of the cytochrome c1 subunit of cytochrome reductase. Cytochrome c then transfers this electron to the cytochrome oxidase complex, the final protein carrier in the mitochondrial electron-transport chain. The chain is Cytochrome c from Theileria annulata.